Reading from the N-terminus, the 460-residue chain is ATP synthase subunit beta (460 aa).

148 to 155 (GGAGVGKT) is an ATP binding site.

The protein belongs to the ATPase alpha/beta chains family. As to quaternary structure, F-type ATPases have 2 components, CF(1) - the catalytic core - and CF(0) - the membrane proton channel. CF(1) has five subunits: alpha(3), beta(3), gamma(1), delta(1), epsilon(1). CF(0) has three main subunits: a(1), b(2) and c(9-12). The alpha and beta chains form an alternating ring which encloses part of the gamma chain. CF(1) is attached to CF(0) by a central stalk formed by the gamma and epsilon chains, while a peripheral stalk is formed by the delta and b chains.

The protein localises to the cell inner membrane. The enzyme catalyses ATP + H2O + 4 H(+)(in) = ADP + phosphate + 5 H(+)(out). Produces ATP from ADP in the presence of a proton gradient across the membrane. The catalytic sites are hosted primarily by the beta subunits. The sequence is that of ATP synthase subunit beta from Alcanivorax borkumensis (strain ATCC 700651 / DSM 11573 / NCIMB 13689 / SK2).